Reading from the N-terminus, the 530-residue chain is Autoinducer-2 kinase (530 aa).

Belongs to the FGGY kinase family.

It is found in the cytoplasm. It catalyses the reaction (S)-4,5-dihydroxypentane-2,3-dione + ATP = (2S)-2-hydroxy-3,4-dioxopentyl phosphate + ADP + H(+). Its function is as follows. Catalyzes the phosphorylation of autoinducer-2 (AI-2) to phospho-AI-2, which subsequently inactivates the transcriptional regulator LsrR and leads to the transcription of the lsr operon. Phosphorylates the ring-open form of (S)-4,5-dihydroxypentane-2,3-dione (DPD), which is the precursor to all AI-2 signaling molecules, at the C5 position. The chain is Autoinducer-2 kinase from Salmonella paratyphi A (strain ATCC 9150 / SARB42).